The following is a 301-amino-acid chain: Methionyl-tRNA formyltransferase (301 aa).

Position 110-113 (110-113 (SLLP)) interacts with (6S)-5,6,7,8-tetrahydrofolate.

The protein belongs to the Fmt family.

The catalysed reaction is L-methionyl-tRNA(fMet) + (6R)-10-formyltetrahydrofolate = N-formyl-L-methionyl-tRNA(fMet) + (6S)-5,6,7,8-tetrahydrofolate + H(+). Attaches a formyl group to the free amino group of methionyl-tRNA(fMet). The formyl group appears to play a dual role in the initiator identity of N-formylmethionyl-tRNA by promoting its recognition by IF2 and preventing the misappropriation of this tRNA by the elongation apparatus. In Acidiphilium cryptum (strain JF-5), this protein is Methionyl-tRNA formyltransferase.